Here is a 631-residue protein sequence, read N- to C-terminus: RING finger protein 112 (631 aa).

The segment at 57-98 (CSICLERLRDPISLDCGHDFCIRCFSTHRLPGCEPPCCPECR) adopts an RING-type zinc-finger fold. Positions 131–631 (PVRAEPLLLV…GDREPLLQEE (501 aa)) are interaction with ZBTB16. One can recognise a GB1/RHD3-type G domain in the interval 166-397 (DTPVCLLAVL…YVSDVLSAAP (232 aa)). Position 318-319 (318-319 (RD)) interacts with GTP. 2 helical membrane-spanning segments follow: residues 547–567 (LAAV…GVVG) and 580–600 (GMVA…GGGV).

This sequence belongs to the TRAFAC class dynamin-like GTPase superfamily. GB1/RHD3 GTPase family. GB1 subfamily. Self-associates. Interacts with SP1 in an oxidative stress-regulated manner. Interacts with SIGMAR1 in an oxidative stress-regulated manner. Interacts with ZBTB16 (via C2H2-type zinc finger domains 1 and 2). Auto-ubiquitinated. Predominantly expressed in brain. Decreased expression in glioma brain tumors as compared to normal brains (at protein level).

It is found in the membrane. The protein resides in the cytoplasm. It localises to the nucleus. Its subcellular location is the nuclear body. The protein localises to the nucleoplasm. It is found in the endosome. The protein resides in the cytoplasmic vesicle. It localises to the secretory vesicle. Its subcellular location is the synaptic vesicle. The protein localises to the postsynaptic density. It is found in the perikaryon. The protein resides in the cell projection. It localises to the neuron projection. It catalyses the reaction S-ubiquitinyl-[E2 ubiquitin-conjugating enzyme]-L-cysteine + [acceptor protein]-L-lysine = [E2 ubiquitin-conjugating enzyme]-L-cysteine + N(6)-ubiquitinyl-[acceptor protein]-L-lysine.. It functions in the pathway protein modification; protein ubiquitination. Functionally, E3 ubiquitin-protein ligase that plays an important role in neuronal differentiation, including neurogenesis and gliogenesis, during brain development. During embryonic development initiates neuronal differentiation by inducing cell cycle arrest at the G0/G1 phase through up-regulation of cell-cycle regulatory proteins. Plays a role not only in the fetal period during the development of the nervous system, but also in the adult brain, where it is involved in the maintenance of neural functions and protection of the nervous tissue cells from oxidative stress-induced damage. Exhibits GTPase and E3 ubiquitin-protein ligase activities. Regulates dendritic spine density and synaptic neurotransmission; its ability to hydrolyze GTP is involved in the maintenance of dendritic spine density. This is RING finger protein 112 (RNF112) from Homo sapiens (Human).